The sequence spans 212 residues: Proteasome subunit beta type-2 (212 aa).

The protein belongs to the peptidase T1B family. As to quaternary structure, the 26S proteasome consists of a 20S proteasome core and two 19S regulatory subunits. The 20S proteasome core is composed of 28 subunits that are arranged in four stacked rings, resulting in a barrel-shaped structure. The two end rings are each formed by seven alpha subunits, and the two central rings are each formed by seven beta subunits. The catalytic chamber with the active sites is on the inside of the barrel.

The protein localises to the cytoplasm. It is found in the nucleus. Non-catalytic component of the proteasome, a multicatalytic proteinase complex which is characterized by its ability to cleave peptides with Arg, Phe, Tyr, Leu, and Glu adjacent to the leaving group at neutral or slightly basic pH. The proteasome has an ATP-dependent proteolytic activity. This Oryza sativa subsp. japonica (Rice) protein is Proteasome subunit beta type-2 (PBD1).